A 201-amino-acid polypeptide reads, in one-letter code: Testis-expressed protein 38 (201 aa).

The chain crosses the membrane as a helical span at residues 3-23 (ISLCIGFLGLCSVLIGSCILF).

The protein localises to the membrane. This Mus musculus (Mouse) protein is Testis-expressed protein 38 (Tex38).